We begin with the raw amino-acid sequence, 326 residues long: Type II methyltransferase M.EcoRI (326 aa).

Belongs to the N(4)/N(6)-methyltransferase family. In terms of assembly, monomer.

The enzyme catalyses a 2'-deoxyadenosine in DNA + S-adenosyl-L-methionine = an N(6)-methyl-2'-deoxyadenosine in DNA + S-adenosyl-L-homocysteine + H(+). Its function is as follows. A methylase that recognizes the double-stranded sequence 5'-GAATTC-3', methylates A-3 on both strands, and protects the DNA from cleavage by the EcoRI endonuclease. In Escherichia coli, this protein is Type II methyltransferase M.EcoRI (ecoRIM).